The following is a 294-amino-acid chain: Endonuclease 3 (294 aa).

A signal peptide spans 1 to 24 (MGWSLRMWIVSILVLTQLVNGALC). A divalent metal cation contacts are provided by tryptophan 25 and histidine 30. 25-30 (WGDAGH) lines the substrate pocket. Cysteine 34 and cysteine 65 form a disulfide bridge. A divalent metal cation-binding residues include aspartate 69 and histidine 84. Substrate-binding positions include 69–75 (DEIKKLP), 84–87 (HFAD), and 94–99 (NYEYSR). Cystine bridges form between cysteine 93/cysteine 241, cysteine 101/cysteine 106, and cysteine 221/cysteine 228. 2 residues coordinate substrate: asparagine 113 and tyrosine 131. Residue asparagine 113 is glycosylated (N-linked (GlcNAc...) asparagine). Asparagine 132 is a glycosylation site (N-linked (GlcNAc...) asparagine). A divalent metal cation is bound by residues histidine 142, aspartate 146, histidine 152, histidine 176, and aspartate 180. The segment at 142 to 191 (HYMGDIHQPLHEGFIGDLGGNKIKVHWYNQETNLHRVWDDMIIESALETY) is substrate binding. 3 N-linked (GlcNAc...) asparagine glycosylation sites follow: asparagine 193, asparagine 224, and asparagine 247. Positions 279 to 294 (GTLNRIFSAKRKLARA) are cleaved as a propeptide — removed in mature form.

It belongs to the nuclease type I family. As to quaternary structure, monomer. Zn(2+) is required as a cofactor. It depends on Mn(2+) as a cofactor.

It catalyses the reaction Endonucleolytic cleavage to 5'-phosphomononucleotide and 5'-phosphooligonucleotide end-products.. In terms of biological role, endonuclease that can use RNA and single-stranded DNA as substrates. In contradiction with PubMed:23620482, cannot hydrolyze single-stranded DNA and does not cleave mismatches. This Arabidopsis thaliana (Mouse-ear cress) protein is Endonuclease 3.